The chain runs to 986 residues: Translation initiation factor IF-2 (986 aa).

Residues 47 to 388 (SAPAQTPHKE…RSKGRKGKYE (342 aa)) form a disordered region. Residues 53–64 (PHKEVSQEEVRV) show a composition bias toward basic and acidic residues. A compositionally biased stretch (low complexity) spans 78 to 94 (PEAASAEAASAPAAQEE). Residues 95–113 (APQKAEPEKVEAEKAEAPK) are compositionally biased toward basic and acidic residues. Low complexity-rich tracts occupy residues 127-141 (EAAPVPKPAAAPAEA) and 153-214 (APVA…QAPA). Composition is skewed to basic and acidic residues over residues 215 to 225 (KAEEQEPEKAT) and 268 to 278 (GVERPGTERPA). Low complexity predominate over residues 286-300 (PAGAPGRPGERPTTG). The segment covering 358 to 374 (GKKDSFKDILDKRERVF) has biased composition (basic and acidic residues). The region spanning 486 to 653 (KRPPVVTIMG…MVLLQADVLE (168 aa)) is the tr-type G domain. The interval 495 to 502 (GHVDHGKT) is G1. 495–502 (GHVDHGKT) serves as a coordination point for GTP. Residues 520 to 524 (GITQH) are G2. Residues 541 to 544 (DTPG) are G3. GTP is bound by residues 541-545 (DTPGH) and 595-598 (NKID). The G4 stretch occupies residues 595–598 (NKID). The tract at residues 631-633 (SAK) is G5.

It belongs to the TRAFAC class translation factor GTPase superfamily. Classic translation factor GTPase family. IF-2 subfamily.

The protein resides in the cytoplasm. One of the essential components for the initiation of protein synthesis. Protects formylmethionyl-tRNA from spontaneous hydrolysis and promotes its binding to the 30S ribosomal subunits. Also involved in the hydrolysis of GTP during the formation of the 70S ribosomal complex. The sequence is that of Translation initiation factor IF-2 from Citrifermentans bemidjiense (strain ATCC BAA-1014 / DSM 16622 / JCM 12645 / Bem) (Geobacter bemidjiensis).